The following is a 192-amino-acid chain: Threonylcarbamoyl-AMP synthase (192 aa).

Residues 5-192 (TTSVAEAAHC…DATTGRVIRD (188 aa)) enclose the YrdC-like domain.

It belongs to the SUA5 family. TsaC subfamily.

It is found in the cytoplasm. The catalysed reaction is L-threonine + hydrogencarbonate + ATP = L-threonylcarbamoyladenylate + diphosphate + H2O. Required for the formation of a threonylcarbamoyl group on adenosine at position 37 (t(6)A37) in tRNAs that read codons beginning with adenine. Catalyzes the conversion of L-threonine, HCO(3)(-)/CO(2) and ATP to give threonylcarbamoyl-AMP (TC-AMP) as the acyladenylate intermediate, with the release of diphosphate. This is Threonylcarbamoyl-AMP synthase from Acinetobacter baylyi (strain ATCC 33305 / BD413 / ADP1).